The chain runs to 240 residues: Acetoacetyl-CoA reductase (240 aa).

NADP(+) is bound by residues 18-20 (RGI) and 82-86 (NAGIT). Residues serine 134 and 141–144 (NVGQ) contribute to the substrate site. The active-site Proton acceptor is the tyrosine 147. Position 177–180 (177–180 (PGFI)) interacts with NADP(+). Position 178-179 (178-179 (GF)) interacts with substrate.

It belongs to the short-chain dehydrogenases/reductases (SDR) family.

The enzyme catalyses a (3R)-3-hydroxyacyl-CoA + NADP(+) = a 3-oxoacyl-CoA + NADPH + H(+). It functions in the pathway biopolymer metabolism; poly-(R)-3-hydroxybutanoate biosynthesis. Catalyzes the reduction of acetoacetyl-CoA to (R)-3-hydroxybutyryl-CoA. When expressed in E.coli with Synechocystis PhaA, PhaC and PhaE confers the ability to synthesize up to 12% (w/w) poly(3-hydroxybutyrate) (PHB) depending on the carbon source. The polypeptide is Acetoacetyl-CoA reductase (Synechocystis sp. (strain ATCC 27184 / PCC 6803 / Kazusa)).